Consider the following 156-residue polypeptide: MPRKGYIGKRDVLPDPMYNSKVLTKLINSLMYDGKKGLAQKICYDAFDVIQNKTGKEPMEVFEEAMNNVMPLLEVKARRIGGATYQVPLEVRPERRQTLGIRWILIAARKRGEKYMSERLAGELMDAANNLGAAVKKREETHKMAEANKAFAHYRY.

This sequence belongs to the universal ribosomal protein uS7 family. Part of the 30S ribosomal subunit. Contacts proteins S9 and S11.

One of the primary rRNA binding proteins, it binds directly to 16S rRNA where it nucleates assembly of the head domain of the 30S subunit. Is located at the subunit interface close to the decoding center, probably blocks exit of the E-site tRNA. This is Small ribosomal subunit protein uS7 from Clostridium tetani (strain Massachusetts / E88).